The sequence spans 710 residues: Conserved oligomeric Golgi complex subunit 2 (710 aa).

This sequence belongs to the COG2 family. As to quaternary structure, component of the conserved oligomeric Golgi complex which is composed of eight different subunits and is required for normal Golgi morphology and localization.

The protein resides in the golgi apparatus membrane. Required for normal Golgi morphology and function. This is Conserved oligomeric Golgi complex subunit 2 from Drosophila melanogaster (Fruit fly).